Consider the following 234-residue polypeptide: MKIIRVQDQIEGGKIAFTLLKDSLAKGAKTLGLATGSSPISFYQEMVKSPLDFSDLTSINLDEYVGLSVESDQSYDYFMRQNLFNAKPFKKNYLPNGLATDIEAEAKRYDQIIAEHPIDFQVLGIGRNGHIGFNEPGTSFEEETHVVDLQESTIEANSRFFTSIEDVPKQAISMGIASIMKSKMIVLLAFGQEKADAIKGMVFGPITEDLPASILQKHDHVIVIVDEAAASQLD.

Catalysis depends on aspartate 62, which acts as the Proton acceptor; for enolization step. The active-site For ring-opening step is asparagine 128. Histidine 130 functions as the Proton acceptor; for ring-opening step in the catalytic mechanism. Catalysis depends on glutamate 135, which acts as the For ring-opening step.

The protein belongs to the glucosamine/galactosamine-6-phosphate isomerase family. NagB subfamily.

It carries out the reaction alpha-D-glucosamine 6-phosphate + H2O = beta-D-fructose 6-phosphate + NH4(+). It functions in the pathway amino-sugar metabolism; N-acetylneuraminate degradation; D-fructose 6-phosphate from N-acetylneuraminate: step 5/5. Catalyzes the reversible isomerization-deamination of glucosamine 6-phosphate (GlcN6P) to form fructose 6-phosphate (Fru6P) and ammonium ion. In Streptococcus pyogenes serotype M3 (strain ATCC BAA-595 / MGAS315), this protein is Glucosamine-6-phosphate deaminase.